Here is a 403-residue protein sequence, read N- to C-terminus: F-box only protein 22 (403 aa).

M1 carries the post-translational modification N-acetylmethionine. Residues 19–71 (STFVLSNLAEVVERVLTFLPAKALLRVACVCRLWRECVRRVLRTHRSVTWISA) enclose the F-box domain. S128 is modified (phosphoserine). K194 bears the N6-acetyllysine mark.

Directly interacts with SKP1 and CUL1.

The protein localises to the cytoplasm. It is found in the myofibril. Its subcellular location is the sarcomere. The protein resides in the z line. Its function is as follows. Substrate-recognition component of the SCF (SKP1-CUL1-F-box protein)-type E3 ubiquitin ligase complex. Promotes the proteasome-dependent degradation of key sarcomeric proteins, such as alpha-actinin (ACTN2) and filamin-C (FLNC), essential for maintenance of normal contractile function. In Pongo abelii (Sumatran orangutan), this protein is F-box only protein 22 (FBXO22).